The primary structure comprises 68 residues: MQVYQCCEAIRIAYNQIGSGEQGYVPQAIAATIRALNAVASDERVPAELRQEAAYAAANLLISDHQDA.

It belongs to the UPF0253 family.

The polypeptide is UPF0253 protein ASA_2184 (Aeromonas salmonicida (strain A449)).